Reading from the N-terminus, the 69-residue chain is MSVLTSLLLRGLTGSARWLPVPRAKVHSMPPEVELGIMEKAIGLTSCFVSLFLPAGWILSHLEDYKRPE.

The N-terminal 25 residues, 1–25, are a transit peptide targeting the mitochondrion; the sequence is MSVLTSLLLRGLTGSARWLPVPRAK. The SIFI-degron signature appears at 2 to 19; sequence SVLTSLLLRGLTGSARWL. The Mitochondrial matrix segment spans residues 26–36; that stretch reads VHSMPPEVELG. Residues 37–60 traverse the membrane as a helical segment; the sequence is IMEKAIGLTSCFVSLFLPAGWILS. At 61–69 the chain is on the mitochondrial intermembrane side; that stretch reads HLEDYKRPE.

This sequence belongs to the cytochrome c oxidase VIII family. In terms of assembly, component of the cytochrome c oxidase (complex IV, CIV), a multisubunit enzyme composed of 14 subunits. The complex is composed of a catalytic core of 3 subunits MT-CO1, MT-CO2 and MT-CO3, encoded in the mitochondrial DNA, and 11 supernumerary subunits COX4I, COX5A, COX5B, COX6A, COX6B, COX6C, COX7A, COX7B, COX7C, COX8 and NDUFA4, which are encoded in the nuclear genome. The complex exists as a monomer or a dimer and forms supercomplexes (SCs) in the inner mitochondrial membrane with NADH-ubiquinone oxidoreductase (complex I, CI) and ubiquinol-cytochrome c oxidoreductase (cytochrome b-c1 complex, complex III, CIII), resulting in different assemblies (supercomplex SCI(1)III(2)IV(1) and megacomplex MCI(2)III(2)IV(2)). In terms of processing, in response to mitochondrial stress, the precursor protein is ubiquitinated by the SIFI complex in the cytoplasm before mitochondrial import, leading to its degradation. Within the SIFI complex, UBR4 initiates ubiquitin chain that are further elongated or branched by KCMF1.

Its subcellular location is the mitochondrion inner membrane. The protein operates within energy metabolism; oxidative phosphorylation. Functionally, component of the cytochrome c oxidase, the last enzyme in the mitochondrial electron transport chain which drives oxidative phosphorylation. The respiratory chain contains 3 multisubunit complexes succinate dehydrogenase (complex II, CII), ubiquinol-cytochrome c oxidoreductase (cytochrome b-c1 complex, complex III, CIII) and cytochrome c oxidase (complex IV, CIV), that cooperate to transfer electrons derived from NADH and succinate to molecular oxygen, creating an electrochemical gradient over the inner membrane that drives transmembrane transport and the ATP synthase. Cytochrome c oxidase is the component of the respiratory chain that catalyzes the reduction of oxygen to water. Electrons originating from reduced cytochrome c in the intermembrane space (IMS) are transferred via the dinuclear copper A center (CU(A)) of subunit 2 and heme A of subunit 1 to the active site in subunit 1, a binuclear center (BNC) formed by heme A3 and copper B (CU(B)). The BNC reduces molecular oxygen to 2 water molecules using 4 electrons from cytochrome c in the IMS and 4 protons from the mitochondrial matrix. The sequence is that of Cytochrome c oxidase subunit 8A, mitochondrial (COX8A) from Macaca silenus (Lion-tailed macaque).